Consider the following 367-residue polypeptide: Heparan sulfate glucosamine 3-O-sulfotransferase 2 (367 aa).

Residues 1 to 19 (MAYRVLGRAGPPQPRRARR) lie on the Cytoplasmic side of the membrane. Residues 20–39 (LLFAFTLSLSCTYLCYSFLC) traverse the membrane as a helical; Signal-anchor for type II membrane protein segment. The Lumenal segment spans residues 40–367 (CCDGLGQSRL…ETVGQDFRWE (328 aa)). The segment at 66-115 (LLAKSRPCDPPGPTPSEPSAPSAPAAAAPAPRLSGSNHSGSPKPGTKRLP) is disordered. Positions 73–83 (CDPPGPTPSEP) are enriched in pro residues. The segment covering 84–96 (SAPSAPAAAAPAP) has biased composition (low complexity). An N-linked (GlcNAc...) asparagine glycan is attached at asparagine 102. 124-128 (KGGTR) contributes to the 3'-phosphoadenylyl sulfate binding site. Residues 146 to 152 (EPHFFDR) and 177 to 180 (KTPS) contribute to the substrate site. A glycan (N-linked (GlcNAc...) asparagine) is linked at asparagine 193. Residues arginine 205 and serine 213 each coordinate 3'-phosphoadenylyl sulfate. Asparagine 235 carries N-linked (GlcNAc...) asparagine glycosylation. 245 to 246 (WN) is a binding site for substrate. N-linked (GlcNAc...) asparagine glycosylation occurs at asparagine 306. Cysteine 313 and cysteine 325 are disulfide-bonded. Residue 330–334 (KGRTH) coordinates 3'-phosphoadenylyl sulfate.

It belongs to the sulfotransferase 1 family.

Its subcellular location is the golgi apparatus membrane. The enzyme catalyses alpha-D-glucosaminyl-[heparan sulfate](n) + 3'-phosphoadenylyl sulfate = 3-sulfo-alpha-D-glucosaminyl-[heparan sulfate](n) + adenosine 3',5'-bisphosphate + H(+). Sulfotransferase that utilizes 3'-phospho-5'-adenylyl sulfate (PAPS) to catalyze the transfer of a sulfo group to an N-unsubstituted glucosamine linked to a 2-O-sulfo iduronic acid unit on heparan sulfate. Catalyzes the O-sulfation of glucosamine in GlcA2S-GlcNS. Unlike HS3ST1/3-OST-1, does not convert non-anticoagulant heparan sulfate to anticoagulant heparan sulfate. The chain is Heparan sulfate glucosamine 3-O-sulfotransferase 2 (Hs3st2) from Mus musculus (Mouse).